The primary structure comprises 455 residues: Fumarate hydratase class II (455 aa).

Substrate contacts are provided by residues 96–98 (SGT), 122–125 (HPND), 132–134 (SSN), and T180. Residue H181 is the Proton donor/acceptor of the active site. S311 is a catalytic residue. Substrate contacts are provided by residues S312 and 317–319 (KVN).

The protein belongs to the class-II fumarase/aspartase family. Fumarase subfamily. In terms of assembly, homotetramer.

It localises to the cytoplasm. It catalyses the reaction (S)-malate = fumarate + H2O. Its pathway is carbohydrate metabolism; tricarboxylic acid cycle; (S)-malate from fumarate: step 1/1. Involved in the TCA cycle. Catalyzes the stereospecific interconversion of fumarate to L-malate. The sequence is that of Fumarate hydratase class II from Listeria monocytogenes serotype 4b (strain F2365).